The following is a 206-amino-acid chain: Dephospho-CoA kinase (206 aa).

Residues 4–200 (IVALTGGIGS…HRYLKLATAA (197 aa)) form the DPCK domain. Position 12–17 (12–17 (GSGKST)) interacts with ATP.

The protein belongs to the CoaE family.

It is found in the cytoplasm. The catalysed reaction is 3'-dephospho-CoA + ATP = ADP + CoA + H(+). The protein operates within cofactor biosynthesis; coenzyme A biosynthesis; CoA from (R)-pantothenate: step 5/5. In terms of biological role, catalyzes the phosphorylation of the 3'-hydroxyl group of dephosphocoenzyme A to form coenzyme A. The sequence is that of Dephospho-CoA kinase from Yersinia pestis.